The chain runs to 642 residues: Fork head protein homolog 2 (642 aa).

The tract at residues 1–23 (MTVRRLESKSEHISDDEERKEQL) is disordered. In terms of domain architecture, FHA spans 96–160 (IILGREPANP…NGIKVDGKLF (65 aa)). The fork-head DNA-binding region spans 223–318 (KPPYSYSVMI…AKTRKTPRKR (96 aa)). Positions 310 to 319 (KTRKTPRKRS) are enriched in basic residues. Disordered regions lie at residues 310 to 392 (KTRK…ETYK), 519 to 574 (VSDS…TEEN), and 586 to 642 (ATME…KSSA). A phosphoserine mark is found at Ser-319, Ser-321, Ser-322, Ser-334, and Ser-336. Residues 348-362 (TSIPAAEPASSTTSA) show a composition bias toward low complexity. 3 stretches are compositionally biased toward polar residues: residues 363–381 (RDQT…TAET), 519–552 (VSDS…SANK), and 599–642 (TPTS…KSSA). Ser-375, Ser-535, and Ser-626 each carry phosphoserine.

Phosphorylated. Occurs periodically during mitosis.

The protein resides in the nucleus. Its function is as follows. Required for promoter sequence element PCB-driven, M-phase-specific transcription. Acts as a transcriptional activator with a role in the regulation of mitosis. Binds, cooperatively with mcm1, the CLB cluster regulatory elements throughout the cell cycle. Regulates the periodic transcription of cdc15 and spo12. Required for the correct timing, positioning and contraction of the division septum. This chain is Fork head protein homolog 2 (fkh2), found in Schizosaccharomyces pombe (strain 972 / ATCC 24843) (Fission yeast).